The chain runs to 353 residues: MLLFETVREMGHEQVLFCHSKNPEIKAIIAIHDTTLGPAMGATRILPYINEEAALKDALRLSRGMTYKAACANIPAGGGKAVIIANPENKTDDLLRAYGRFVDSLNGRFITGQDVNITPDDVRTISQETKYVVGVSEKSGGPAPITSLGVFLGIKAAVESRWQSKRLDGMKVAVQGLGNVGKNLCRHLHEHDVQLFVSDVDPIKAEEVKRLFGATVVEPTEIYSLDVDIFAPCALGGILNSHTIPFLQASIIAGAANNQLENEQLHSQMLAKKGILYSPDYVINAGGLINVYNEMIGYDEEKAFKQVHNIYDTLLAIFEIAKEQGVTTNDAARRLAEDRINNSKRSKSKAIAA.

Arginine 44 is a binding site for NAD(+). Lysine 80 (proton donor/acceptor) is an active-site residue. Residues aspartate 114, threonine 146, 176 to 181, lysine 204, and 255 to 257 each bind NAD(+); these read GLGNVG and AAN.

This sequence belongs to the Glu/Leu/Phe/Val dehydrogenases family. In terms of assembly, homodimer.

The enzyme catalyses L-tryptophan + NAD(+) + H2O = indole-3-pyruvate + NH4(+) + NADH + H(+). Highly susceptible to inhibition by indole-3-pyruvate. Activity is not affected by the presence of metal ions, EDTA, KCl or DMSO. Functionally, catalyzes the reversible oxidative deamination of L-tryptophan to indole-3-pyruvate in the presence of NAD(+). Shows weak activity with L-phenylalanine, but cannot use other L-amino acids and D-Trp. Cannot use NADP(+) for oxidative deamination of L-Trp, and shows only weak activity with NADPH for reductive amination of indole-3-pyruvate. Involved in the biosynthesis of scytonemin, a cyanobacterial radiation-absorbing pigment. The sequence is that of L-tryptophan dehydrogenase from Nostoc punctiforme.